Here is a 1358-residue protein sequence, read N- to C-terminus: DNA-directed RNA polymerase subunit beta (1358 aa).

The protein belongs to the RNA polymerase beta chain family. The RNAP catalytic core consists of 2 alpha, 1 beta, 1 beta' and 1 omega subunit. When a sigma factor is associated with the core the holoenzyme is formed, which can initiate transcription.

The enzyme catalyses RNA(n) + a ribonucleoside 5'-triphosphate = RNA(n+1) + diphosphate. Functionally, DNA-dependent RNA polymerase catalyzes the transcription of DNA into RNA using the four ribonucleoside triphosphates as substrates. The chain is DNA-directed RNA polymerase subunit beta from Francisella tularensis subsp. holarctica (strain LVS).